We begin with the raw amino-acid sequence, 111 residues long: Protein RnfH (111 aa).

The segment at 88-111 (RRRRVQKTRESGTREGQKWLRGGA) is disordered. Residues 94 to 105 (KTRESGTREGQK) are compositionally biased toward basic and acidic residues.

It belongs to the UPF0125 (RnfH) family.

The protein is Protein RnfH of Cupriavidus pinatubonensis (strain JMP 134 / LMG 1197) (Cupriavidus necator (strain JMP 134)).